The primary structure comprises 513 residues: Catalase (513 aa).

The first 30 residues, 1–30 (MNPSLNAFRPGRLLVAASLTASLLSLSVQA), serve as a signal peptide directing secretion. Residues H81 and N153 contribute to the active site. Y361 lines the heme pocket. The segment covering 391 to 407 (DGALNAGHSTSGVNYQP) has biased composition (polar residues). The disordered stretch occupies residues 391–413 (DGALNAGHSTSGVNYQPSRLDPR).

The protein belongs to the catalase family. Requires heme as cofactor.

Its subcellular location is the periplasm. The catalysed reaction is 2 H2O2 = O2 + 2 H2O. Decomposes hydrogen peroxide into water and oxygen; serves to protect cells from the toxic effects of hydrogen peroxide. This is Catalase (katB) from Pseudomonas aeruginosa (strain ATCC 15692 / DSM 22644 / CIP 104116 / JCM 14847 / LMG 12228 / 1C / PRS 101 / PAO1).